The following is a 72-amino-acid chain: Gas vesicle protein A (72 aa).

It belongs to the gas vesicle GvpA family. As to quaternary structure, the gas vesicle shell is 2 nm thick and consists of a single layer of this protein. It forms helical ribs nearly perpendicular to the long axis of the vesicle.

It is found in the gas vesicle shell. Functionally, gas vesicles are hollow, gas filled proteinaceous nanostructures found in some microorganisms. During planktonic growth they allow positioning of the organism at a favorable depth for light or nutrient acquisition. GvpA forms the protein shell. The chain is Gas vesicle protein A from Planktothrix agardhii (Oscillatoria agardhii).